Here is a 1466-residue protein sequence, read N- to C-terminus: Adhesion G protein-coupled receptor L1 (1466 aa).

Residues 1 to 28 (MARLAAALWSLCVTTVLVTSATQGLSRA) form the signal peptide. Topologically, residues 29 to 852 (GLPFGLMRRE…EIYQGRINEL (824 aa)) are extracellular. Residues 40 to 129 (ACEGYPIELR…KYLEVQYDCV (90 aa)) enclose the SUEL-type lectin domain. 5 cysteine pairs are disulfide-bonded: Cys41–Cys71, Cys50–Cys128, Cys83–Cys115, Cys96–Cys102, and Cys135–Cys317. An alpha-L-rhamnose-binding site is contributed by Glu42. A glycan (N-linked (GlcNAc...) asparagine) is linked at Asn98. 117 to 120 (GTYK) provides a ligand contact to alpha-L-rhamnose. Residues 134–393 (VCPGTLQKVL…VVRYSLEFGP (260 aa)) form the Olfactomedin-like domain. The disordered stretch occupies residues 395 to 463 (DPSAGPATSP…APAPSTRRPP (69 aa)). Residues 400–436 (PATSPPLSTTTTARPTPLTSTASPAATTPLRRAPLTT) show a composition bias toward low complexity. Residues 448–463 (DLPPATAPAPSTRRPP) show a composition bias toward pro residues. Intrachain disulfides connect Cys475/Cys510 and Cys498/Cys527. 6 N-linked (GlcNAc...) asparagine glycosylation sites follow: Asn526, Asn635, Asn736, Asn795, Asn800, and Asn821. Positions 664 to 845 (PARFLAAKQN…AVLMAHREIY (182 aa)) constitute a GAIN-B domain. Cystine bridges form between Cys796–Cys827 and Cys815–Cys829. The segment at 796–845 (CSFWNYSERSMLGYWSTQGCRLVESNKTHTTCACSHLTNFAVLMAHREIY) is GPS. Residues 853–873 (LLSVITWVGIVISLVCLAICI) traverse the membrane as a helical segment. At 874-887 (STFCFLRGLQTDRN) the chain is on the cytoplasmic side. Residues 888–908 (TIHKNLCINLFLAELLFLVGI) form a helical membrane-spanning segment. At 909–914 (DKTQYE) the chain is on the extracellular side. Residues 915-935 (VACPIFAGLLHYFFLAAFSWL) form a helical membrane-spanning segment. The Cytoplasmic portion of the chain corresponds to 936 to 958 (CLEGVHLYLLLVEVFESEYSRTK). A helical transmembrane segment spans residues 959–979 (YYYLGGYCFPALVVGIAAAID). Over 980 to 996 (YRSYGTEKACWLRVDNY) the chain is Extracellular. Residues 997–1017 (FIWSFIGPVSFVIVVNLVFLM) traverse the membrane as a helical segment. The Cytoplasmic segment spans residues 1018–1044 (VTLHKMIRSSSVLKPDSSRLDNIKSWA). A helical transmembrane segment spans residues 1045-1065 (LGAIALLFLLGLTWAFGLLFI). The Extracellular portion of the chain corresponds to 1066 to 1069 (NKES). A helical membrane pass occupies residues 1070–1090 (VVMAYLFTTFNAFQGVFIFVF). Residues 1091 to 1466 (HCALQKKVHK…DGQMQLVTSL (376 aa)) lie on the Cytoplasmic side of the membrane. Position 1188 is an omega-N-methylarginine (Arg1188). A Phosphoserine modification is found at Ser1214. 4 disordered regions span residues 1242–1267 (FNNS…RGRN), 1288–1319 (RGAS…GPGS), 1352–1421 (ESES…SRPP), and 1443–1466 (YLAA…VTSL). The segment covering 1296–1307 (GPPPEPPVPPVP) has biased composition (pro residues). Ser1319 carries the phosphoserine modification. The segment covering 1400-1412 (ALPPPPPAPPGPP) has biased composition (pro residues). Phosphoserine occurs at positions 1448 and 1465.

The protein belongs to the G-protein coupled receptor 2 family. Adhesion G-protein coupled receptor (ADGR) subfamily. As to quaternary structure, forms a heterodimer, consisting of a large extracellular region (p120) non-covalently linked to a seven-transmembrane moiety (p85). Interacts with syntaxin and with proteins of the SHANK family via the PDZ domain. Interacts (via extracellular domain) with FLRT1, FLRT2 and FLRT3 (via extracellular domain). Post-translationally, autoproteolytically cleaved into 2 subunits, an extracellular subunit and a seven-transmembrane subunit. This proteolytic processing takes place early in the biosynthetic pathway, either in the endoplasmic reticulum or in the early compartment of the Golgi apparatus.

Its subcellular location is the cell membrane. It localises to the cell projection. It is found in the axon. The protein resides in the growth cone. The protein localises to the synapse. Its subcellular location is the presynaptic cell membrane. It localises to the synaptosome. Its function is as follows. Calcium-independent receptor of high affinity for alpha-latrotoxin, an excitatory neurotoxin present in black widow spider venom which triggers massive exocytosis from neurons and neuroendocrine cells. Receptor for TENM2 that mediates heterophilic synaptic cell-cell contact and postsynaptic specialization. Receptor probably implicated in the regulation of exocytosis. The protein is Adhesion G protein-coupled receptor L1 of Mus musculus (Mouse).